The primary structure comprises 220 residues: Large ribosomal subunit protein bL21 (220 aa).

The interval 109-158 (SKKVAAKPATSEEKAAEEKPAKAKKEAAEKGASPRETKAAPLFSAPEGEP) is disordered. Positions 118–146 (TSEEKAAEEKPAKAKKEAAEKGASPRETK) are enriched in basic and acidic residues.

This sequence belongs to the bacterial ribosomal protein bL21 family. Part of the 50S ribosomal subunit. Contacts protein L20.

Its function is as follows. This protein binds to 23S rRNA in the presence of protein L20. This chain is Large ribosomal subunit protein bL21, found in Chelativorans sp. (strain BNC1).